Here is an 867-residue protein sequence, read N- to C-terminus: Nitrate reductase [NADPH] (867 aa).

The segment at 38 to 58 is disordered; sequence DIPLPPPSKEPTEVLSIDKPT. Residue C152 participates in Mo-molybdopterin binding. One can recognise a Cytochrome b5 heme-binding domain in the interval 514-589; it reads NRIIDLQEFK…MPDYHIGTMD (76 aa). H549 and H572 together coordinate heme. Residues 615–726 enclose the FAD-binding FR-type domain; sequence KSWTKATLVK…KGPTGRFEYL (112 aa). FAD-binding positions include 669–672, 686–690, F691, 700–702, and T753; these read RSYT, LVKIY, and KMT. Residue 837 to 846 participates in NADP(+) binding; the sequence is MVLICGPEAM.

It belongs to the nitrate reductase family. As to quaternary structure, homodimer. Requires FAD as cofactor. Heme is required as a cofactor. The cofactor is Mo-molybdopterin.

It catalyses the reaction nitrite + NADP(+) + H2O = nitrate + NADPH + H(+). Nitrate reductase is a key enzyme involved in the first step of nitrate assimilation in plants, fungi and bacteria. The polypeptide is Nitrate reductase [NADPH] (niaD) (Aspergillus niger).